A 361-amino-acid chain; its full sequence is Spermidine/putrescine import ATP-binding protein PotA (361 aa).

The ABC transporter domain occupies L4–I234. G36–T43 lines the ATP pocket.

This sequence belongs to the ABC transporter superfamily. Spermidine/putrescine importer (TC 3.A.1.11.1) family. As to quaternary structure, the complex is composed of two ATP-binding proteins (PotA), two transmembrane proteins (PotB and PotC) and a solute-binding protein (PotD).

It is found in the cell inner membrane. The catalysed reaction is ATP + H2O + polyamine-[polyamine-binding protein]Side 1 = ADP + phosphate + polyamineSide 2 + [polyamine-binding protein]Side 1.. Part of the ABC transporter complex PotABCD involved in spermidine/putrescine import. Responsible for energy coupling to the transport system. The chain is Spermidine/putrescine import ATP-binding protein PotA from Nitrosomonas europaea (strain ATCC 19718 / CIP 103999 / KCTC 2705 / NBRC 14298).